The sequence spans 207 residues: LexA repressor (207 aa).

The H-T-H motif DNA-binding region spans 28-48; sequence VREIGEAVGLASSSTVHGHLA. Residues S129 and K167 each act as for autocatalytic cleavage activity in the active site.

Belongs to the peptidase S24 family. In terms of assembly, homodimer.

The enzyme catalyses Hydrolysis of Ala-|-Gly bond in repressor LexA.. Its function is as follows. Represses a number of genes involved in the response to DNA damage (SOS response), including recA and lexA. In the presence of single-stranded DNA, RecA interacts with LexA causing an autocatalytic cleavage which disrupts the DNA-binding part of LexA, leading to derepression of the SOS regulon and eventually DNA repair. The polypeptide is LexA repressor (Brevibacillus brevis (strain 47 / JCM 6285 / NBRC 100599)).